A 242-amino-acid polypeptide reads, in one-letter code: Zinc import ATP-binding protein ZnuC (242 aa).

One can recognise an ABC transporter domain in the interval 24–241 (INVKDLSFAY…EKFLKMFSSY (218 aa)). An ATP-binding site is contributed by 56–63 (GPNGGGKT).

It belongs to the ABC transporter superfamily. Zinc importer (TC 3.A.1.15.5) family. The complex is composed of two ATP-binding proteins (ZnuC), two transmembrane proteins (ZnuB) and a solute-binding protein (ZnuA).

Its subcellular location is the cell inner membrane. The enzyme catalyses Zn(2+)(out) + ATP(in) + H2O(in) = Zn(2+)(in) + ADP(in) + phosphate(in) + H(+)(in). In terms of biological role, part of the ABC transporter complex ZnuABC involved in zinc import. Responsible for energy coupling to the transport system. This chain is Zinc import ATP-binding protein ZnuC, found in Ehrlichia ruminantium (strain Gardel).